The primary structure comprises 512 residues: Sugar transport protein MST7 (512 aa).

The Cytoplasmic segment spans residues 1-17; sequence MENAGAGDGAPKHYPGK. Residues 18–38 form a helical membrane-spanning segment; sequence MTVFVFIACLVASSGGLIFGY. At 39-81 the chain is on the extracellular side; the sequence is DIGISGGVTSMDPFLSRFFPSVYAKEKEVVDTNQYCKFDSEPL. The chain crosses the membrane as a helical span at residues 82–102; sequence TLFTSSLYLAALIASLFASVI. Residues 103 to 116 are Cytoplasmic-facing; it reads TRKLGRKMTMLGGG. The chain crosses the membrane as a helical span at residues 117-137; the sequence is FIFLIGAVLNGAAVNVAMLII. The Extracellular segment spans residues 138–139; sequence GR. A helical membrane pass occupies residues 140–160; sequence ILLGIGVGFSIQAVPLYLSEM. The Cytoplasmic segment spans residues 161–166; sequence APAKMR. The helical transmembrane segment at 167 to 187 threads the bilayer; the sequence is GMLNIIFQLMITVGILFANLI. Residues 188–201 are Extracellular-facing; the sequence is NYFTDKIAGGWGWR. Residues 202–222 form a helical membrane-spanning segment; the sequence is VSLGLAAVPAVIMTVGSILLP. The Cytoplasmic segment spans residues 223–294; it reads DTPNSLLSRG…MSVLIPTLQQ (72 aa). The helical transmembrane segment at 295–315 threads the bilayer; sequence LTGINVVMFYAPVLFKTIGFG. The Extracellular segment spans residues 316-320; it reads GTASL. A helical membrane pass occupies residues 321–341; the sequence is MSAVITGLVNMFATFVSIATV. At 342–347 the chain is on the cytoplasmic side; sequence DRFGRR. Residues 348-368 form a helical membrane-spanning segment; that stretch reads VLFIQGGIQMIIAQFILGTLI. Topologically, residues 369-385 are extracellular; that stretch reads AVKFGTAGVANISQGYA. Residues 386–406 form a helical membrane-spanning segment; it reads IVVVLFICLFVSAFAWSWGPL. The Cytoplasmic segment spans residues 407 to 425; it reads GWLVPSEIFPLEIRSAAQS. A helical transmembrane segment spans residues 426–446; the sequence is VVVVFNMAFTFFIAQIFLMML. The Extracellular segment spans residues 447–450; sequence CRLK. Residues 451 to 471 traverse the membrane as a helical segment; it reads FGLFFFFGAMELIMTGFVLVF. Topologically, residues 472–512 are cytoplasmic; that stretch reads LPETKGIPIEEMDRIWGEHWYWSRFVGAGRNRVMQMASTNV.

Belongs to the major facilitator superfamily. Sugar transporter (TC 2.A.1.1) family.

The protein localises to the membrane. Its function is as follows. Mediates active uptake of hexoses by sugar:proton symport. The polypeptide is Sugar transport protein MST7 (Oryza sativa subsp. japonica (Rice)).